The chain runs to 801 residues: Probable inorganic carbon transporter subunit DabA (801 aa).

Zn(2+) contacts are provided by cysteine 332, aspartate 334, histidine 500, and cysteine 515.

This sequence belongs to the inorganic carbon transporter (TC 9.A.2) DabA family. In terms of assembly, forms a complex with DabB. Zn(2+) serves as cofactor.

The protein localises to the cell inner membrane. Functionally, part of an energy-coupled inorganic carbon pump. This chain is Probable inorganic carbon transporter subunit DabA, found in Marinobacter nauticus (strain ATCC 700491 / DSM 11845 / VT8) (Marinobacter aquaeolei).